The primary structure comprises 117 residues: Translation initiation factor 1A (117 aa).

Residues 17-92 (IRVPLPDRSK…ERGDIVYRYT (76 aa)) form the S1-like domain.

It belongs to the eIF-1A family.

Seems to be required for maximal rate of protein biosynthesis. Enhances ribosome dissociation into subunits and stabilizes the binding of the initiator Met-tRNA(I) to 40 S ribosomal subunits. The protein is Translation initiation factor 1A of Thermococcus kodakarensis (strain ATCC BAA-918 / JCM 12380 / KOD1) (Pyrococcus kodakaraensis (strain KOD1)).